Consider the following 438-residue polypeptide: Adenosylhomocysteinase (438 aa).

Positions 61, 137, and 162 each coordinate substrate. 163–165 (TTT) provides a ligand contact to NAD(+). Residues Lys192 and Asp196 each contribute to the substrate site. NAD(+)-binding positions include Asn197, 226–231 (GYGDVG), Glu249, Asn284, 305–307 (IGH), and Asn352.

It belongs to the adenosylhomocysteinase family. Requires NAD(+) as cofactor.

It is found in the cytoplasm. It catalyses the reaction S-adenosyl-L-homocysteine + H2O = L-homocysteine + adenosine. Its pathway is amino-acid biosynthesis; L-homocysteine biosynthesis; L-homocysteine from S-adenosyl-L-homocysteine: step 1/1. In terms of biological role, may play a key role in the regulation of the intracellular concentration of adenosylhomocysteine. The sequence is that of Adenosylhomocysteinase from Christiangramia forsetii (strain DSM 17595 / CGMCC 1.15422 / KT0803) (Gramella forsetii).